We begin with the raw amino-acid sequence, 350 residues long: Induced myeloid leukemia cell differentiation protein Mcl-1 (350 aa).

Residues Lys-5 and Lys-40 each participate in a glycyl lysine isopeptide (Lys-Gly) (interchain with G-Cter in ubiquitin) cross-link. The interval 47 to 87 is disordered; it reads EIGGGEAGAVIGGSAGASPPSTLTPDSRRVARPPPIGAEVP. Positions 50–61 are enriched in gly residues; that stretch reads GGEAGAVIGGSA. The segment at 104 to 175 is PEST-like; that stretch reads RAAPLEEMEA…PAEEEEDELY (72 aa). Ser-121 carries the phosphoserine modification. A Glycyl lysine isopeptide (Lys-Gly) (interchain with G-Cter in ubiquitin) cross-link involves residue Lys-136. Positions 148 to 171 are disordered; the sequence is GESGNNTSTDGSLPSTPPPAEEEE. Polar residues predominate over residues 150-161; sequence SGNNTSTDGSLP. A Phosphoserine; by GSK3-alpha and GSK3-beta modification is found at Ser-159. Ser-162 bears the Phosphoserine mark. Thr-163 carries the phosphothreonine; by MAPK modification. Glycyl lysine isopeptide (Lys-Gly) (interchain with G-Cter in ubiquitin) cross-links involve residues Lys-194 and Lys-197. The BH3 motif lies at 209-223; the sequence is ALETLRRVGDGVQRN. The BH1 signature appears at 252–272; it reads HVFSDGVTNWGRIVTLISFGA. The BH2 signature appears at 304-319; sequence DWLVKQRGWDGFVEFF. A helical transmembrane segment spans residues 328–348; it reads IRNVLLAFAGVAGVGAGLAYL.

It belongs to the Bcl-2 family. Interacts with HIF3A (via C-terminus domain). Interacts with BAD, BOK, BIK and BMF. Interacts with PMAIP1. Interacts with BBC3. Isoform 1 interacts with BAX, BAK1 and TPT1. Heterodimer of isoform 1 and isoform 2. Homodimers of isoform 1 or isoform 2 are not detected. Isoform 2 does not interact with pro-apoptotic BCL2-related proteins. Interacts with RTL10/BOP. Interacts with BCL2L11; may sequester BCL2L11 to prevent its pro-apoptotic activity. Interacts with GIMAP5 and HSPA8/HSC70; the interaction between HSPA8 and MCL1 is impaired in the absence of GIMAP5. Post-translationally, cleaved by CASP3 during apoptosis. In intact cells cleavage occurs preferentially after Asp-127, yielding a pro-apoptotic 28 kDa C-terminal fragment. In terms of processing, rapidly degraded in the absence of phosphorylation on Thr-163 in the PEST region. Phosphorylated on Ser-159, by GSK3, in response to IL3/interleukin-3 withdrawal. Phosphorylation at Ser-159 induces ubiquitination and proteasomal degradation, abrogating the anti-apoptotic activity. Treatment with taxol or okadaic acid induces phosphorylation on additional sites. Post-translationally, ubiquitinated. Ubiquitination is induced by phosphorylation at Ser-159. Deubiquitinated by USP20; leading to increased stability.

The protein resides in the membrane. Its subcellular location is the cytoplasm. The protein localises to the mitochondrion. It is found in the nucleus. It localises to the nucleoplasm. Its function is as follows. Involved in the regulation of apoptosis versus cell survival, and in the maintenance of viability but not of proliferation. Mediates its effects by interactions with a number of other regulators of apoptosis. Isoform 1 inhibits apoptosis. Isoform 2 promotes apoptosis. The sequence is that of Induced myeloid leukemia cell differentiation protein Mcl-1 (MCL1) from Homo sapiens (Human).